The following is a 693-amino-acid chain: Elongation factor G (693 aa).

Residues 8 to 282 enclose the tr-type G domain; that stretch reads EKTRNIGIMA…AVIDYLPSPL (275 aa). Residues 17 to 24, 81 to 85, and 135 to 138 contribute to the GTP site; these read AHVDAGKT, DTPGH, and NKMD.

The protein belongs to the TRAFAC class translation factor GTPase superfamily. Classic translation factor GTPase family. EF-G/EF-2 subfamily.

The protein localises to the cytoplasm. In terms of biological role, catalyzes the GTP-dependent ribosomal translocation step during translation elongation. During this step, the ribosome changes from the pre-translocational (PRE) to the post-translocational (POST) state as the newly formed A-site-bound peptidyl-tRNA and P-site-bound deacylated tRNA move to the P and E sites, respectively. Catalyzes the coordinated movement of the two tRNA molecules, the mRNA and conformational changes in the ribosome. This Streptococcus gordonii (strain Challis / ATCC 35105 / BCRC 15272 / CH1 / DL1 / V288) protein is Elongation factor G.